Here is a 396-residue protein sequence, read N- to C-terminus: 1-deoxy-D-xylulose 5-phosphate reductoisomerase (396 aa).

Residues threonine 10, glycine 11, serine 12, isoleucine 13, glycine 36, lysine 37, asparagine 38, and asparagine 124 each coordinate NADPH. A 1-deoxy-D-xylulose 5-phosphate-binding site is contributed by lysine 125. Glutamate 126 is a binding site for NADPH. Aspartate 150 provides a ligand contact to Mn(2+). Residues serine 151, glutamate 152, serine 186, and histidine 209 each contribute to the 1-deoxy-D-xylulose 5-phosphate site. A Mn(2+)-binding site is contributed by glutamate 152. Residue glycine 215 coordinates NADPH. 1-deoxy-D-xylulose 5-phosphate is bound by residues serine 222, asparagine 227, lysine 228, and glutamate 231. Glutamate 231 contributes to the Mn(2+) binding site.

Belongs to the DXR family. Mg(2+) serves as cofactor. The cofactor is Mn(2+).

The catalysed reaction is 2-C-methyl-D-erythritol 4-phosphate + NADP(+) = 1-deoxy-D-xylulose 5-phosphate + NADPH + H(+). The protein operates within isoprenoid biosynthesis; isopentenyl diphosphate biosynthesis via DXP pathway; isopentenyl diphosphate from 1-deoxy-D-xylulose 5-phosphate: step 1/6. Functionally, catalyzes the NADPH-dependent rearrangement and reduction of 1-deoxy-D-xylulose-5-phosphate (DXP) to 2-C-methyl-D-erythritol 4-phosphate (MEP). The polypeptide is 1-deoxy-D-xylulose 5-phosphate reductoisomerase (Haemophilus ducreyi (strain 35000HP / ATCC 700724)).